Here is a 609-residue protein sequence, read N- to C-terminus: Proline--tRNA ligase (609 aa).

Belongs to the class-II aminoacyl-tRNA synthetase family. ProS type 1 subfamily. Homodimer.

Its subcellular location is the cytoplasm. The catalysed reaction is tRNA(Pro) + L-proline + ATP = L-prolyl-tRNA(Pro) + AMP + diphosphate. Catalyzes the attachment of proline to tRNA(Pro) in a two-step reaction: proline is first activated by ATP to form Pro-AMP and then transferred to the acceptor end of tRNA(Pro). As ProRS can inadvertently accommodate and process non-cognate amino acids such as alanine and cysteine, to avoid such errors it has two additional distinct editing activities against alanine. One activity is designated as 'pretransfer' editing and involves the tRNA(Pro)-independent hydrolysis of activated Ala-AMP. The other activity is designated 'posttransfer' editing and involves deacylation of mischarged Ala-tRNA(Pro). The misacylated Cys-tRNA(Pro) is not edited by ProRS. In Synechococcus sp. (strain JA-3-3Ab) (Cyanobacteria bacterium Yellowstone A-Prime), this protein is Proline--tRNA ligase.